We begin with the raw amino-acid sequence, 539 residues long: Putative dimethylaniline monooxygenase [N-oxide-forming] 6 (539 aa).

Residues 9-13 (GAGVS), glutamate 32, 40-41 (LW), and 61-62 (NS) contribute to the FAD site. 195–198 (SGSD) lines the NADP(+) pocket. Residues 518-538 (FYNLLKMLSFPLLLLAVTLTF) traverse the membrane as a helical segment.

Belongs to the FMO family. The cofactor is FAD.

Its subcellular location is the microsome membrane. It is found in the endoplasmic reticulum membrane. The enzyme catalyses N,N-dimethylaniline + NADPH + O2 + H(+) = N,N-dimethylaniline N-oxide + NADP(+) + H2O. Functionally, it is probable that this protein is only produced in very small quantity or not at all as the gene coding for it seems to be unable to produce full-length transcripts. The polypeptide is Putative dimethylaniline monooxygenase [N-oxide-forming] 6 (FMO6P) (Homo sapiens (Human)).